Reading from the N-terminus, the 547-residue chain is Methionine--tRNA ligase (547 aa).

A 'HIGH' region motif is present at residues 13–23 (PYANGPLHIGH). The Zn(2+) site is built by Cys145, Cys148, Cys158, and Cys161. Residues 334–338 (QFSKS) carry the 'KMSKS' region motif. Position 337 (Lys337) interacts with ATP.

It belongs to the class-I aminoacyl-tRNA synthetase family. MetG type 1 subfamily. Requires Zn(2+) as cofactor.

Its subcellular location is the cytoplasm. It carries out the reaction tRNA(Met) + L-methionine + ATP = L-methionyl-tRNA(Met) + AMP + diphosphate. In terms of biological role, is required not only for elongation of protein synthesis but also for the initiation of all mRNA translation through initiator tRNA(fMet) aminoacylation. This is Methionine--tRNA ligase from Thermoplasma acidophilum (strain ATCC 25905 / DSM 1728 / JCM 9062 / NBRC 15155 / AMRC-C165).